Here is a 396-residue protein sequence, read N- to C-terminus: Elongation factor Tu (396 aa).

Residues Lys10–Lys206 enclose the tr-type G domain. Residues Gly19–Thr26 are G1. Gly19 to Thr26 serves as a coordination point for GTP. A Mg(2+)-binding site is contributed by Thr26. Residues Gly60 to Ser64 are G2. The tract at residues Asp81–Gly84 is G3. Residues Asp81–His85 and Asn136–Asp139 each bind GTP. The G4 stretch occupies residues Asn136–Asp139. The tract at residues Ser174–Leu176 is G5.

The protein belongs to the TRAFAC class translation factor GTPase superfamily. Classic translation factor GTPase family. EF-Tu/EF-1A subfamily. Monomer.

It is found in the cytoplasm. The catalysed reaction is GTP + H2O = GDP + phosphate + H(+). Functionally, GTP hydrolase that promotes the GTP-dependent binding of aminoacyl-tRNA to the A-site of ribosomes during protein biosynthesis. This Dichelobacter nodosus (strain VCS1703A) protein is Elongation factor Tu.